We begin with the raw amino-acid sequence, 131 residues long: Ribonuclease P protein component (131 aa).

The protein belongs to the RnpA family. In terms of assembly, consists of a catalytic RNA component (M1 or rnpB) and a protein subunit.

The enzyme catalyses Endonucleolytic cleavage of RNA, removing 5'-extranucleotides from tRNA precursor.. Functionally, RNaseP catalyzes the removal of the 5'-leader sequence from pre-tRNA to produce the mature 5'-terminus. It can also cleave other RNA substrates such as 4.5S RNA. The protein component plays an auxiliary but essential role in vivo by binding to the 5'-leader sequence and broadening the substrate specificity of the ribozyme. The sequence is that of Ribonuclease P protein component from Synechococcus sp. (strain WH7803).